The sequence spans 154 residues: Cytochrome c-550 (154 aa).

The signal sequence occupies residues 1 to 20 (MKISIYATLAALSLALPAVA). Gln21 carries the post-translational modification Pyrrolidone carboxylic acid. Heme c is bound by residues Cys35, Cys38, His39, and Met120. The propeptide occupies 150–154 (EGAAN).

Binds 1 heme c group covalently per subunit.

This Paracoccus versutus (Thiobacillus versutus) protein is Cytochrome c-550 (cyc).